We begin with the raw amino-acid sequence, 623 residues long: Glutathione import ATP-binding protein GsiA (623 aa).

2 ABC transporter domains span residues 18–272 (VRNL…QGLL) and 317–567 (LQVS…RKLM). ATP is bound by residues 52 to 59 (GESGSGKS) and 360 to 367 (GESGCGKS).

Belongs to the ABC transporter superfamily. Glutathione importer (TC 3.A.1.5.11) family. In terms of assembly, the complex is composed of two ATP-binding proteins (GsiA), two transmembrane proteins (GsiC and GsiD) and a solute-binding protein (GsiB).

The protein localises to the cell inner membrane. It catalyses the reaction glutathione(out) + ATP + H2O = glutathione(in) + ADP + phosphate + H(+). In terms of biological role, part of the ABC transporter complex GsiABCD involved in glutathione import. Responsible for energy coupling to the transport system. This Pectobacterium atrosepticum (strain SCRI 1043 / ATCC BAA-672) (Erwinia carotovora subsp. atroseptica) protein is Glutathione import ATP-binding protein GsiA.